A 419-amino-acid chain; its full sequence is Hyaluronan synthase (419 aa).

A run of 5 helical transmembrane segments spans residues 8–28, 33–53, 318–338, 345–365, and 376–396; these read LIVLSFIFLISILIYLNMYLF, VGIYGVILITYLVIKLGLSFL, IVALWTIFEVVMFMMLIVAIG, AIQLDLIKLFAFLSIIFIVAL, and PASFLLSPLYGILHLFVLQPL.

It belongs to the NodC/HAS family. Mg(2+) serves as cofactor.

It localises to the cell membrane. The enzyme catalyses [hyaluronan](n) + UDP-N-acetyl-alpha-D-glucosamine = N-acetyl-beta-D-glucosaminyl-(1-&gt;4)-[hyaluronan](n) + UDP + H(+). The catalysed reaction is N-acetyl-beta-D-glucosaminyl-(1-&gt;4)-[hyaluronan](n) + UDP-alpha-D-glucuronate = [hyaluronan](n+1) + UDP + H(+). It functions in the pathway glycan biosynthesis; hyaluronan biosynthesis. Its function is as follows. Glycosaminoglycan synthesis. The hyaluronic acid capsule is involved in the pathogenicity of group A Streptococci; it may be the major virulence determinant. This chain is Hyaluronan synthase (hasA), found in Streptococcus pyogenes serotype M18 (strain MGAS8232).